A 390-amino-acid polypeptide reads, in one-letter code: Chorismate synthase (390 aa).

Arginine 40 and arginine 46 together coordinate NADP(+). FMN is bound by residues 129–131 (RAS), 249–250 (QA), glycine 294, 309–313 (KPIPT), and arginine 335.

It belongs to the chorismate synthase family. As to quaternary structure, homotetramer. It depends on FMNH2 as a cofactor.

It carries out the reaction 5-O-(1-carboxyvinyl)-3-phosphoshikimate = chorismate + phosphate. It functions in the pathway metabolic intermediate biosynthesis; chorismate biosynthesis; chorismate from D-erythrose 4-phosphate and phosphoenolpyruvate: step 7/7. Catalyzes the anti-1,4-elimination of the C-3 phosphate and the C-6 proR hydrogen from 5-enolpyruvylshikimate-3-phosphate (EPSP) to yield chorismate, which is the branch point compound that serves as the starting substrate for the three terminal pathways of aromatic amino acid biosynthesis. This reaction introduces a second double bond into the aromatic ring system. This is Chorismate synthase from Desulforudis audaxviator (strain MP104C).